A 110-amino-acid polypeptide reads, in one-letter code: UPF0060 membrane protein Bpet0062 (110 aa).

Transmembrane regions (helical) follow at residues 7–27, 33–53, 63–83, and 86–106; these read LGLF…PYLW, SAWL…LLTL, AAYG…VDGV, and ATTD…IMAG.

It belongs to the UPF0060 family.

It is found in the cell inner membrane. This is UPF0060 membrane protein Bpet0062 from Bordetella petrii (strain ATCC BAA-461 / DSM 12804 / CCUG 43448).